Consider the following 508-residue polypeptide: MSLADELLADLEEAGEEDGLYPGGEEGESDGEPGERQVDGGLEDIPEEMEVDYSSTESVTSIAKLRHSKPFAEIMDKISHYVGNQRKNSEVSGPVEADPEYRLIVAANNLTVEIDNELNIIHKFVRDKYSKRFPELESLVPNALDYIRTVKELGNNLEKCKNNETLQQILTNATIMVVSVTASTTQGTMLGDDELQRLEEACDMALELNQSKHRIYEYVESRMSFIAPNLSIIVGASTAAKIMGVAGGLTNLSKMPACNLMLLGAQRRTLSGFSSTSLLPHTGYIYHCDVVQTLPPDLRRKAARLVSAKCTLASRVDSFHESADGKVGYDLKEEIERKFDKWQEPPPVKQVKPLPAPLDGQRKKRGGRRYRKMKERLGLTEIRKHANRMTFAEIEDDAYQEDLGFSLGQLGKSGSGRVRQAQVNDSTKARISKSLQRTLQKQSMTYGGKSTVRDRSSGTSSSVAFTPLQGLEIVNPQAAEKKVAEANQKYFSNMAEFLKVKREKEDKV.

The disordered stretch occupies residues 1 to 45 (MSLADELLADLEEAGEEDGLYPGGEEGESDGEPGERQVDGGLEDI). Positions 7 to 32 (LLADLEEAGEEDGLYPGGEEGESDGE) are enriched in acidic residues. Coiled coils occupy residues 96 to 131 (EADP…KYSK) and 192 to 226 (DDEL…MSFI). The Nop domain maps to 226–344 (IAPNLSIIVG…IERKFDKWQE (119 aa)). Disordered stretches follow at residues 345 to 368 (PPPV…RGGR) and 442 to 461 (QSMT…GTSS). The Nuclear localization signal (NLS) signature appears at 362–375 (RKKRGGRRYRKMKE).

This sequence belongs to the PRP31 family. As to quaternary structure, identified in the spliceosome B complex. Component of the U4/U6-U5 tri-snRNP complex. Component of some MLL1/MLL complex.

Its subcellular location is the nucleus. It localises to the nucleus speckle. The protein localises to the cajal body. In terms of biological role, involved in pre-mRNA splicing as component of the spliceosome. Required for the assembly of the U4/U5/U6 tri-snRNP complex, one of the building blocks of the spliceosome. The chain is U4/U6 small nuclear ribonucleoprotein Prp31 (prpf31) from Danio rerio (Zebrafish).